We begin with the raw amino-acid sequence, 532 residues long: Wee1-like protein kinase 2 (532 aa).

Positions 123–166 are disordered; it reads INPFTPDTVRRNSEHYKRKSQRSDDDEDYGPRSKEIQNSSEDES. Residues 188–465 form the Protein kinase domain; sequence FLELACIGVG…RHDVLCKERA (278 aa). Residues 194-202 and Lys-217 each bind ATP; that span reads IGVGEFGSV. Asp-315 (proton acceptor) is an active-site residue. Residues Asn-320 and Asp-354 each contribute to the Mg(2+) site. Residues 469 to 495 adopt a coiled-coil conformation; that stretch reads ATQLRKELNVEKFRTAMLERELKEARL.

The protein belongs to the protein kinase superfamily. Ser/Thr protein kinase family. WEE1 subfamily.

Its subcellular location is the nucleus. The catalysed reaction is L-tyrosyl-[protein] + ATP = O-phospho-L-tyrosyl-[protein] + ADP + H(+). Oocyte-specific protein tyrosine kinase that phosphorylates and inhibits cdk1 and acts as a key regulator of meiosis. Required to maintain meiotic arrest in oocytes by phosphorylating cdk1 at 'Tyr-15', leading to inhibit cdk1 activity and prevent meiotic reentry. In Danio rerio (Zebrafish), this protein is Wee1-like protein kinase 2 (wee2).